The following is a 494-amino-acid chain: Folate-biopterin transporter (494 aa).

12 helical membrane passes run 31-51, 64-84, 104-124, 133-153, 170-190, 197-217, 246-266, 284-303, 310-330, 346-366, 375-395, and 415-435; these read APSWELLAILSIYFVQGVLGL, LGLSPAAMGALIGLGAAPWIL, SYLWLSGLMGSAGWLLFAAWV, VLLFTSLSVAIGDVIVDSLVV, LTWGAAAVGGIITAYASGALL, TVFAITAIFPLLTVGAAFLIS, ILLPTLFIFFWQATPSAESAF, VRLVTSVAGLIGVGLYQRFL, VIMGWSTVISSLLGLTTLILI, LGDSIILTVTGQIAFMPVLVL, IEATLFALLMSVMNLAGVLSF, and LALLVIITNLSTLLPLPFLGL. The disordered stretch occupies residues 441–461; it reads PQVKDKTEKEDNPDDPGDRLV.

Belongs to the major facilitator superfamily. Folate-biopterin transporter (TC 2.A.71) family.

The protein localises to the cell membrane. In terms of biological role, mediates folate monoglutamate transport involved in tetrahydrofolate biosynthesis. It also mediates transport of antifolates, such as methotrexate and aminopterin. This chain is Folate-biopterin transporter, found in Synechocystis sp. (strain ATCC 27184 / PCC 6803 / Kazusa).